A 122-amino-acid polypeptide reads, in one-letter code: Ribosome-binding factor A (122 aa).

It belongs to the RbfA family. Monomer. Binds 30S ribosomal subunits, but not 50S ribosomal subunits or 70S ribosomes.

It is found in the cytoplasm. Functionally, one of several proteins that assist in the late maturation steps of the functional core of the 30S ribosomal subunit. Associates with free 30S ribosomal subunits (but not with 30S subunits that are part of 70S ribosomes or polysomes). Required for efficient processing of 16S rRNA. May interact with the 5'-terminal helix region of 16S rRNA. This chain is Ribosome-binding factor A, found in Polynucleobacter necessarius subsp. necessarius (strain STIR1).